A 204-amino-acid chain; its full sequence is Urease accessory protein UreE (204 aa).

A compositionally biased stretch (basic and acidic residues) spans 172-190 (HGHAHSHDHDHDHDHDHQH). The tract at residues 172–204 (HGHAHSHDHDHDHDHDHQHGPGCTHGHHGHDHH) is disordered.

This sequence belongs to the UreE family.

The protein resides in the cytoplasm. Its function is as follows. Involved in urease metallocenter assembly. Binds nickel. Probably functions as a nickel donor during metallocenter assembly. This chain is Urease accessory protein UreE, found in Burkholderia orbicola (strain AU 1054).